The sequence spans 462 residues: Argininosuccinate lyase (462 aa).

Belongs to the lyase 1 family. Argininosuccinate lyase subfamily.

The protein localises to the cytoplasm. The enzyme catalyses 2-(N(omega)-L-arginino)succinate = fumarate + L-arginine. It functions in the pathway amino-acid biosynthesis; L-arginine biosynthesis; L-arginine from L-ornithine and carbamoyl phosphate: step 3/3. The polypeptide is Argininosuccinate lyase (Caldicellulosiruptor saccharolyticus (strain ATCC 43494 / DSM 8903 / Tp8T 6331)).